We begin with the raw amino-acid sequence, 185 residues long: Large ribosomal subunit protein uL5 (185 aa).

It belongs to the universal ribosomal protein uL5 family. In terms of assembly, part of the 50S ribosomal subunit; part of the 5S rRNA/L5/L18/L25 subcomplex. Contacts the 5S rRNA and the P site tRNA. Forms a bridge to the 30S subunit in the 70S ribosome.

This is one of the proteins that bind and probably mediate the attachment of the 5S RNA into the large ribosomal subunit, where it forms part of the central protuberance. In the 70S ribosome it contacts protein S13 of the 30S subunit (bridge B1b), connecting the 2 subunits; this bridge is implicated in subunit movement. Contacts the P site tRNA; the 5S rRNA and some of its associated proteins might help stabilize positioning of ribosome-bound tRNAs. This is Large ribosomal subunit protein uL5 from Parabacteroides distasonis (strain ATCC 8503 / DSM 20701 / CIP 104284 / JCM 5825 / NCTC 11152).